The following is a 68-amino-acid chain: MGYRVEADRDLCQGHAMCELEAPEYFRVPKRGQVEILDPEPPEEARGVIKHAVWACPTQALSIRETGE.

Residues Cys12, Gln13, Ala16, Cys18, and Cys56 each contribute to the [3Fe-4S] cluster site.

The cofactor is [3Fe-4S] cluster.

In terms of biological role, ferredoxin that is the redox partner of cytochrome CYP51, a sterol 14alpha-demethylase encoded by an adjacent gene. This is Ferredoxin Fdx from Mycobacterium tuberculosis (strain ATCC 25618 / H37Rv).